Reading from the N-terminus, the 350-residue chain is Ferredoxin--NADP reductase (350 aa).

FAD is bound by residues threonine 14, aspartate 33, glutamine 41, tyrosine 46, alanine 86, phenylalanine 121, aspartate 286, and threonine 327.

The protein belongs to the ferredoxin--NADP reductase type 2 family. In terms of assembly, homodimer. Requires FAD as cofactor.

It carries out the reaction 2 reduced [2Fe-2S]-[ferredoxin] + NADP(+) + H(+) = 2 oxidized [2Fe-2S]-[ferredoxin] + NADPH. The polypeptide is Ferredoxin--NADP reductase (Flavobacterium johnsoniae (strain ATCC 17061 / DSM 2064 / JCM 8514 / BCRC 14874 / CCUG 350202 / NBRC 14942 / NCIMB 11054 / UW101) (Cytophaga johnsonae)).